Reading from the N-terminus, the 133-residue chain is Interleukin-4 (133 aa).

The first 24 residues, 1–24, serve as a signal peptide directing secretion; sequence MGLTYQLIPALVCLLAFTSTFVHG. N-linked (GlcNAc...) asparagine glycosylation is found at Asn-28, Asn-45, Asn-62, Asn-84, Asn-96, and Asn-102. 2 cysteine pairs are disulfide-bonded: Cys-48–Cys-85 and Cys-70–Cys-113.

The protein belongs to the IL-4/IL-13 family.

The protein localises to the secreted. Participates in at least several B-cell activation processes as well as of other cell types. It is a costimulator of DNA-synthesis. It induces the expression of class II MHC molecules on resting B-cells. It enhances both secretion and cell surface expression of IgE and IgG1. It also regulates the expression of the low affinity Fc receptor for IgE (CD23) on both lymphocytes and monocytes. Positively regulates IL31RA expression in macrophages. Stimulates autophagy in dendritic cells by interfering with mTORC1 signaling and through the induction of RUFY4. The polypeptide is Interleukin-4 (IL4) (Felis catus (Cat)).